The chain runs to 589 residues: Aspartate--tRNA(Asp/Asn) ligase (589 aa).

Glu176 serves as a coordination point for L-aspartate. The tract at residues 200 to 203 (QLFK) is aspartate. An L-aspartate-binding site is contributed by Arg222. ATP contacts are provided by residues 222–224 (RDE) and Gln231. Position 450 (His450) interacts with L-aspartate. Position 484 (Glu484) interacts with ATP. Residue Arg491 coordinates L-aspartate. 536–539 (GLDR) lines the ATP pocket.

It belongs to the class-II aminoacyl-tRNA synthetase family. Type 1 subfamily. Homodimer.

It localises to the cytoplasm. The enzyme catalyses tRNA(Asx) + L-aspartate + ATP = L-aspartyl-tRNA(Asx) + AMP + diphosphate. Aspartyl-tRNA synthetase with relaxed tRNA specificity since it is able to aspartylate not only its cognate tRNA(Asp) but also tRNA(Asn). Reaction proceeds in two steps: L-aspartate is first activated by ATP to form Asp-AMP and then transferred to the acceptor end of tRNA(Asp/Asn). This is Aspartate--tRNA(Asp/Asn) ligase from Bacillus cytotoxicus (strain DSM 22905 / CIP 110041 / 391-98 / NVH 391-98).